The chain runs to 117 residues: Alpha-endosulfine (117 aa).

Positions 1–53 (MAAPLGTGARAEDSGQEKQDSQEKETVIPERAEEAKLKAKYPNLGQKPGGSDF) are disordered. Positions 10 to 37 (RAEDSGQEKQDSQEKETVIPERAEEAKL) are enriched in basic and acidic residues. Ser67 is modified (phosphoserine; by GWL). The disordered stretch occupies residues 76 to 117 (KMKNKQLPTAGPDKNLVTGDHIPKPQDLPQRKSSLVASKLAG).

It belongs to the endosulfine family. In terms of processing, phosphorylation at Ser-67 by GWL during mitosis is essential for interaction with PPP2R2D (PR55-delta) and subsequent inactivation of PP2A.

It localises to the cytoplasm. Its function is as follows. Protein phosphatase inhibitor that specifically inhibits protein phosphatase 2A (PP2A) during mitosis. When phosphorylated at Ser-67 during mitosis, specifically interacts with PPP2R2D (PR55-delta) and inhibits its activity, leading to inactivation of PP2A, an essential condition to keep cyclin-B1-CDK1 activity high during M phase. This Gallus gallus (Chicken) protein is Alpha-endosulfine (ENSA).